The primary structure comprises 168 residues: Photosystem I assembly protein Ycf3 (168 aa).

TPR repeat units lie at residues 35–68 (AFTY…EIDP), 72–105 (SYIL…NPFL), and 120–153 (GEQA…TPGN).

Belongs to the Ycf3 family.

Its subcellular location is the plastid. The protein localises to the chloroplast thylakoid membrane. In terms of biological role, essential for the assembly of the photosystem I (PSI) complex. May act as a chaperone-like factor to guide the assembly of the PSI subunits. The chain is Photosystem I assembly protein Ycf3 from Coffea arabica (Arabian coffee).